Here is a 460-residue protein sequence, read N- to C-terminus: Serine/threonine-protein kinase UL13 (460 aa).

The segment at 1–37 (MATRGRPGAKQVADHSVSDGGEQRRIPQKPPGPERCD) is disordered. The span at 12–25 (VADHSVSDGGEQRR) shows a compositional bias: basic and acidic residues. A Protein kinase domain is found at 95 to 460 (LEPYRFLGRG…DVRRTVSALA (366 aa)). ATP is bound by residues 101–109 (LGRGGYGSV) and lysine 120. Residue aspartate 219 is the Proton acceptor of the active site.

Belongs to the protein kinase superfamily. Ser/Thr protein kinase family. Autophosphorylated.

It localises to the virion tegument. The protein localises to the host nucleus. The enzyme catalyses L-seryl-[protein] + ATP = O-phospho-L-seryl-[protein] + ADP + H(+). The catalysed reaction is L-threonyl-[protein] + ATP = O-phospho-L-threonyl-[protein] + ADP + H(+). Its function is as follows. Multifunctional serine/threonine kinase that plays a role in several processes including egress of virus particles from the nucleus, modulation of the actin cytoskeleton and regulation of viral and cellular gene expression. Regulates the nuclear localization of viral envelopment factors UL34 and UL31 homologs, by phosphorylating the US3 kinase homolog, indicating a role in nuclear egress. Disrupts host nuclear lamins, including LMNA and LMNB1. Phosphorylates the viral Fc receptor composed of glycoproteins E (gE) and I (gI). Phosphorylation of glycoprotein E (gE) by UL13 homolog alters its subcellular localization, from the host early endosome to the plasma membrane. Participates in the transcriptional regulation of cellular and viral mRNAs mainly by phosphorylating the viral transcriptional regulator ICP22 homolog. The protein is Serine/threonine-protein kinase UL13 (UL13) of Amazona oratrix (yellow-headed parrot).